The primary structure comprises 358 residues: UPF0283 membrane protein PM0909 (358 aa).

3 helical membrane-spanning segments follow: residues 62–82, 90–110, and 213–233; these read LALTALLFCFAVIAQSIQWLV, WIYFVFSLVTCLVVLLGVSSL, and ALEAAVIVAVSPLAVIDMFFL.

Belongs to the UPF0283 family.

The protein localises to the cell inner membrane. This chain is UPF0283 membrane protein PM0909, found in Pasteurella multocida (strain Pm70).